Here is a 151-residue protein sequence, read N- to C-terminus: Large ribosomal subunit protein uL22 (151 aa).

The protein belongs to the universal ribosomal protein uL22 family. Part of the 50S ribosomal subunit.

Its function is as follows. This protein binds specifically to 23S rRNA. It makes multiple contacts with different domains of the 23S rRNA in the assembled 50S subunit and ribosome. In terms of biological role, the globular domain of the protein is located near the polypeptide exit tunnel on the outside of the subunit, while an extended beta-hairpin is found that lines the wall of the exit tunnel in the center of the 70S ribosome. This Thermoplasma acidophilum (strain ATCC 25905 / DSM 1728 / JCM 9062 / NBRC 15155 / AMRC-C165) protein is Large ribosomal subunit protein uL22.